We begin with the raw amino-acid sequence, 295 residues long: Accessory protein VasW (295 aa).

Functionally, plays an accessory role in VasX-mediated bacterial killing. The polypeptide is Accessory protein VasW (Vibrio cholerae serotype O1 (strain ATCC 39315 / El Tor Inaba N16961)).